The primary structure comprises 2948 residues: Transforming acidic coiled-coil-containing protein 2 (2948 aa).

Polar residues predominate over residues 1 to 30 (MGNENSTSDNQRTLSAQTPRSAQPPGNSQN). 15 disordered regions span residues 1–304 (MGNE…TDDL), 314–333 (RSNS…QESC), 392–453 (AAGG…MPVS), 465–785 (LVGL…PQGE), 825–964 (SSEK…VSPP), 985–1050 (CTGQ…QPDS), 1062–1154 (ALAP…GEAT), 1243–1274 (AAQR…VGEP), 1296–1400 (QPGA…EQIA), 1427–1463 (PGEK…VTLL), 1493–1661 (ASDK…GERR), 1675–1705 (LGNQ…AGEA), 1741–1878 (VLPG…ESPT), 1907–2035 (HAGL…SSGT), and 2052–2460 (LEPR…ETPP). Residues 174–184 (GRERQPKEEGQ) are compositionally biased toward basic and acidic residues. S197, S201, and S269 each carry phosphoserine. The residue at position 325 (V325) is a Phosphothreonine. The residue at position 493 (S493) is a Phosphoserine. Basic and acidic residues predominate over residues 496–507 (ERGEHLNTEQSH). 3 positions are modified to phosphoserine: S561, S571, and S575. Positions 604 to 629 (SKRDPEVGKDELSKPSSDAESRDHPS) are enriched in basic and acidic residues. Phosphoserine is present on S758. Residues 911–926 (SDTPTSSPTDMVWESS) show a composition bias toward low complexity. At S962 the chain carries Phosphoserine. The segment covering 985 to 996 (CTGQGPNKSQQA) has biased composition (polar residues). A Phosphoserine modification is found at S1025. 2 positions are modified to phosphoserine: S1267 and S1313. The span at 1348–1357 (ATAPGAGAKA) shows a compositional bias: low complexity. Residues 1383-1400 (DPKQGTSGGVDTSSEQIA) are compositionally biased toward polar residues. S1562 bears the Phosphoserine mark. Composition is skewed to basic and acidic residues over residues 1801-1823 (DETH…RESP) and 1834-1854 (PKKD…RGAE). Residues 1862 to 1873 (ADDIIQPAAPAD) are compositionally biased toward low complexity. Residues 1939 to 1948 (PAKDLSRSSD) show a composition bias toward basic and acidic residues. Pro residues predominate over residues 1963-1976 (KAPPAPPPPPPEVI). At S2072 the chain carries Phosphoserine. Over residues 2074–2102 (DSVPISKSTLSRSLSLQASDFDGASSSGN) the composition is skewed to polar residues. Low complexity predominate over residues 2114–2124 (STGSSSASSTL). The segment covering 2125-2141 (KRTKKPRPPSLKKKQTT) has biased composition (basic residues). Residues S2161 and S2226 each carry the phosphoserine modification. At T2246 the chain carries Phosphothreonine. Phosphoserine is present on S2256. Positions 2265–2275 (LEFDYSEDKSS) are enriched in basic and acidic residues. Basic residues predominate over residues 2288–2305 (KIGKKPVAKMPLRRPKMK). Residues 2315–2403 (PASPPRSPAE…SPASFEIPAS (89 aa)) enclose the SPAZ domain. A phosphoserine mark is found at S2317, S2321, S2359, S2389, S2392, S2394, and S2403. A compositionally biased stretch (polar residues) spans 2348 to 2368 (NPFSSTSKMQESPKLPQQSYN). Over residues 2382 to 2395 (KTSSKTPSSPSKSP) the composition is skewed to low complexity. Phosphothreonine is present on residues T2430, T2451, T2455, and T2458. 2 positions are modified to phosphoserine: S2512 and S2534. Position 2553 is a phosphothreonine (T2553). The interval 2555 to 2577 (QESPVKSSPVRMSESPTPCSGSS) is disordered. Residues S2557 and S2569 each carry the phosphoserine modification. The segment covering 2568-2577 (ESPTPCSGSS) has biased composition (polar residues). T2625 carries the post-translational modification Phosphothreonine. 2 coiled-coil regions span residues 2675 to 2703 (AQKL…LASR) and 2746 to 2947 (DLDS…KMGK).

It belongs to the TACC family. In terms of assembly, interacts with CCDC100/CEP120. Interacts with microtubules. Interacts with YEATS4, GCN5L2 and PCAF. Phosphorylated by TTK; which is required for localization in centrosome. As to expression, strongly expressed in heart, skeletal muscle, brain, prostate, thyroid and trachea.

The protein localises to the cytoplasm. It is found in the nucleus. Its subcellular location is the cytoskeleton. The protein resides in the microtubule organizing center. It localises to the centrosome. Its function is as follows. Plays a role in the microtubule-dependent coupling of the nucleus and the centrosome. Involved in the processes that regulate centrosome-mediated interkinetic nuclear migration (INM) of neural progenitors. May play a role in organizing centrosomal microtubules. May act as a tumor suppressor protein. May represent a tumor progression marker. The sequence is that of Transforming acidic coiled-coil-containing protein 2 (TACC2) from Homo sapiens (Human).